The sequence spans 322 residues: uncharacterized protein (322 aa).

2 stretches are compositionally biased toward basic residues: residues 1–16 and 43–61; these read MPGNSRRRGAVRKSGT and LRPHHPAAKRARAQPRRPV. The segment at 1–69 is disordered; that stretch reads MPGNSRRRGA…PVKRADETET (69 aa). Positions 261, 281, and 290 each coordinate S-adenosyl-L-methionine.

This sequence belongs to the class IV-like SAM-binding methyltransferase superfamily. RNA methyltransferase TrmH family.

This is an uncharacterized protein from Mycobacterium bovis (strain ATCC BAA-935 / AF2122/97).